A 109-amino-acid chain; its full sequence is Cell division protein FtsL (109 aa).

Topologically, residues 1 to 3 are cytoplasmic; the sequence is MSR. The chain crosses the membrane as a helical span at residues 4 to 21; the sequence is LNIFLLIIVMGCALSVVN. Residues 22–109 are Periplasmic-facing; the sequence is STNQQRQIFI…ASAAPTGGAR (88 aa).

The protein belongs to the FtsL family. As to quaternary structure, part of a complex composed of FtsB, FtsL and FtsQ.

Its subcellular location is the cell inner membrane. Its function is as follows. Essential cell division protein. May link together the upstream cell division proteins, which are predominantly cytoplasmic, with the downstream cell division proteins, which are predominantly periplasmic. This chain is Cell division protein FtsL, found in Burkholderia pseudomallei (strain K96243).